We begin with the raw amino-acid sequence, 215 residues long: LexA repressor (215 aa).

A DNA-binding region (H-T-H motif) is located at residues 28 to 48; sequence RAEIAAELGFSSPNAAEEHLR. Active-site for autocatalytic cleavage activity residues include serine 133 and lysine 170.

This sequence belongs to the peptidase S24 family. Homodimer.

The enzyme catalyses Hydrolysis of Ala-|-Gly bond in repressor LexA.. Represses a number of genes involved in the response to DNA damage (SOS response), including recA and lexA. In the presence of single-stranded DNA, RecA interacts with LexA causing an autocatalytic cleavage which disrupts the DNA-binding part of LexA, leading to derepression of the SOS regulon and eventually DNA repair. The chain is LexA repressor from Burkholderia cenocepacia (strain ATCC BAA-245 / DSM 16553 / LMG 16656 / NCTC 13227 / J2315 / CF5610) (Burkholderia cepacia (strain J2315)).